Consider the following 565-residue polypeptide: Arginine--tRNA ligase (565 aa).

The 'HIGH' region signature appears at 126–136 (ANPTGPLHIGH).

The protein belongs to the class-I aminoacyl-tRNA synthetase family. As to quaternary structure, monomer.

It localises to the cytoplasm. It carries out the reaction tRNA(Arg) + L-arginine + ATP = L-arginyl-tRNA(Arg) + AMP + diphosphate. The protein is Arginine--tRNA ligase of Wolbachia sp. subsp. Brugia malayi (strain TRS).